A 198-amino-acid polypeptide reads, in one-letter code: Glycerol-3-phosphate acyltransferase (198 aa).

5 helical membrane passes run 2-22 (YAVL…AYIF), 48-70 (LGYK…AVLI), 75-97 (MGNT…PVFL), 111-131 (VVMT…VTVI), and 154-174 (IFWN…LAIF).

It belongs to the PlsY family. In terms of assembly, probably interacts with PlsX.

The protein resides in the cell membrane. It catalyses the reaction an acyl phosphate + sn-glycerol 3-phosphate = a 1-acyl-sn-glycero-3-phosphate + phosphate. It functions in the pathway lipid metabolism; phospholipid metabolism. Its function is as follows. Catalyzes the transfer of an acyl group from acyl-phosphate (acyl-PO(4)) to glycerol-3-phosphate (G3P) to form lysophosphatidic acid (LPA). This enzyme utilizes acyl-phosphate as fatty acyl donor, but not acyl-CoA or acyl-ACP. In Thermoanaerobacter sp. (strain X514), this protein is Glycerol-3-phosphate acyltransferase.